The primary structure comprises 204 residues: Venom allergen 5 (204 aa).

Intrachain disulfides connect cysteine 4–cysteine 17, cysteine 8–cysteine 101, cysteine 26–cysteine 94, and cysteine 170–cysteine 187. The SCP domain maps to leucine 45–tyrosine 189.

It belongs to the CRISP family. Venom allergen 5-like subfamily. As to expression, expressed by the venom gland.

The protein localises to the secreted. The polypeptide is Venom allergen 5 (Vespula maculifrons (Eastern yellow jacket)).